Reading from the N-terminus, the 304-residue chain is Ribonuclease Z (304 aa).

Residues His-63, His-65, Asp-67, His-68, His-143, Asp-213, and His-271 each coordinate Zn(2+). The Proton acceptor role is filled by Asp-67.

Belongs to the RNase Z family. Homodimer. Requires Zn(2+) as cofactor.

It carries out the reaction Endonucleolytic cleavage of RNA, removing extra 3' nucleotides from tRNA precursor, generating 3' termini of tRNAs. A 3'-hydroxy group is left at the tRNA terminus and a 5'-phosphoryl group is left at the trailer molecule.. Zinc phosphodiesterase, which displays some tRNA 3'-processing endonuclease activity. Probably involved in tRNA maturation, by removing a 3'-trailer from precursor tRNA. The protein is Ribonuclease Z of Porphyromonas gingivalis (strain ATCC 33277 / DSM 20709 / CIP 103683 / JCM 12257 / NCTC 11834 / 2561).